The sequence spans 456 residues: Bifunctional protein GlmU (456 aa).

A pyrophosphorylase region spans residues 1 to 229; the sequence is MLNNAMSVVI…LSEVEGVNNR (229 aa). Residues 11 to 14, K25, Q76, 81 to 82, 103 to 105, G140, E154, N169, and N227 contribute to the UDP-N-acetyl-alpha-D-glucosamine site; these read LAAG, GT, and YGD. D105 is a Mg(2+) binding site. N227 is a Mg(2+) binding site. Residues 230–250 form a linker region; that stretch reads LQLSRLERVYQFEQAEKLLLA. An N-acetyltransferase region spans residues 251–456; it reads GVMLRDPARF…EGWRRPVKKK (206 aa). 2 residues coordinate UDP-N-acetyl-alpha-D-glucosamine: R333 and K351. Catalysis depends on H363, which acts as the Proton acceptor. The UDP-N-acetyl-alpha-D-glucosamine site is built by Y366 and N377. Residues A380, 386–387, S405, A423, and R440 contribute to the acetyl-CoA site; that span reads NY.

The protein in the N-terminal section; belongs to the N-acetylglucosamine-1-phosphate uridyltransferase family. This sequence in the C-terminal section; belongs to the transferase hexapeptide repeat family. In terms of assembly, homotrimer. Mg(2+) is required as a cofactor.

It localises to the cytoplasm. The catalysed reaction is alpha-D-glucosamine 1-phosphate + acetyl-CoA = N-acetyl-alpha-D-glucosamine 1-phosphate + CoA + H(+). It carries out the reaction N-acetyl-alpha-D-glucosamine 1-phosphate + UTP + H(+) = UDP-N-acetyl-alpha-D-glucosamine + diphosphate. It functions in the pathway nucleotide-sugar biosynthesis; UDP-N-acetyl-alpha-D-glucosamine biosynthesis; N-acetyl-alpha-D-glucosamine 1-phosphate from alpha-D-glucosamine 6-phosphate (route II): step 2/2. The protein operates within nucleotide-sugar biosynthesis; UDP-N-acetyl-alpha-D-glucosamine biosynthesis; UDP-N-acetyl-alpha-D-glucosamine from N-acetyl-alpha-D-glucosamine 1-phosphate: step 1/1. It participates in bacterial outer membrane biogenesis; LPS lipid A biosynthesis. Its function is as follows. Catalyzes the last two sequential reactions in the de novo biosynthetic pathway for UDP-N-acetylglucosamine (UDP-GlcNAc). The C-terminal domain catalyzes the transfer of acetyl group from acetyl coenzyme A to glucosamine-1-phosphate (GlcN-1-P) to produce N-acetylglucosamine-1-phosphate (GlcNAc-1-P), which is converted into UDP-GlcNAc by the transfer of uridine 5-monophosphate (from uridine 5-triphosphate), a reaction catalyzed by the N-terminal domain. In Escherichia coli O7:K1 (strain IAI39 / ExPEC), this protein is Bifunctional protein GlmU.